A 321-amino-acid chain; its full sequence is Electron transfer flavoprotein subunit alpha (321 aa).

FAD-binding residues include Arg-211, Ser-236, Arg-237, Gln-250, Val-251, Ser-254, Gly-255, Ser-270, Ser-272, Gln-274, His-275, Asn-289, Asp-307, and Ile-308.

In terms of assembly, heterodimer of an alpha and a beta subunit. Forms a ternary complex with trimethylamine dehydrogenase. Requires FAD as cofactor.

Heterodimeric electron transfer flavoprotein that accepts electrons from trimethylamine dehydrogenase. It transfers the electrons to the main respiratory chain via ETF-ubiquinone oxidoreductase (ETF dehydrogenase). This is Electron transfer flavoprotein subunit alpha (etfA) from Methylophilus methylotrophus (Bacterium W3A1).